The primary structure comprises 593 residues: Gamma-humulene synthase (593 aa).

Polar residues predominate over residues 1-26 (MAQISESVSPSTDLKSTESSITSNRH). The segment at 1-34 (MAQISESVSPSTDLKSTESSITSNRHGNMWEDDR) is disordered. D343, D347, D488, and E496 together coordinate Mg(2+). Positions 343–347 (DDLYD) match the DDXXD motif motif.

This sequence belongs to the terpene synthase family. Tpsd subfamily. It depends on Mg(2+) as a cofactor. The cofactor is K(+).

The protein resides in the cytoplasm. It carries out the reaction (2E,6E)-farnesyl diphosphate = gamma-humulene + diphosphate. The enzyme catalyses (2E,6E)-farnesyl diphosphate = sibirene + diphosphate. The catalysed reaction is (2E,6E)-farnesyl diphosphate = longifolene + diphosphate. It catalyses the reaction (2E,6E)-farnesyl diphosphate = beta-himachalene + diphosphate. It carries out the reaction (2E,6E)-farnesyl diphosphate = gamma-himachalene + diphosphate. The enzyme catalyses (2E,6E)-farnesyl diphosphate = alpha-himachalene + diphosphate. The protein operates within terpene metabolism; oleoresin biosynthesis. Functionally, involved in defensive oleoresin formation in conifers in response to insect attack or other injury. Involved in 52 sesquiterpene (C15) olefins biosynthesis. The protein is Gamma-humulene synthase (ag5) of Abies grandis (Grand fir).